Here is a 184-residue protein sequence, read N- to C-terminus: Probable DNA-directed RNA polymerase subunit delta (184 aa).

One can recognise an HTH HARE-type domain in the interval 14-82; the sequence is KSFIDMAHTL…GENNWGLRDW (69 aa). Positions 114–184 are disordered; that stretch reads LLGEEEEEID…FNDDPDDDKI (71 aa). The segment covering 117–184 has biased composition (acidic residues); that stretch reads EEEEEIDDQE…FNDDPDDDKI (68 aa).

It belongs to the RpoE family. As to quaternary structure, RNAP is composed of a core of 2 alpha, a beta and a beta' subunits. The core is associated with a delta subunit and one of several sigma factors.

Its function is as follows. Participates in both the initiation and recycling phases of transcription. In the presence of the delta subunit, RNAP displays an increased specificity of transcription, a decreased affinity for nucleic acids, and an increased efficiency of RNA synthesis because of enhanced recycling. In Staphylococcus carnosus (strain TM300), this protein is Probable DNA-directed RNA polymerase subunit delta.